Reading from the N-terminus, the 39-residue chain is MASTGRIPLWLIATVGGTAALTVVGLFFYGSYSGVGSSL.

Residues 7 to 27 traverse the membrane as a helical segment; the sequence is IPLWLIATVGGTAALTVVGLF.

It belongs to the PsbJ family. As to quaternary structure, PSII is composed of 1 copy each of membrane proteins PsbA, PsbB, PsbC, PsbD, PsbE, PsbF, PsbH, PsbI, PsbJ, PsbK, PsbL, PsbM, PsbT, PsbX, PsbY, PsbZ, Psb30/Ycf12, at least 3 peripheral proteins of the oxygen-evolving complex and a large number of cofactors. It forms dimeric complexes.

Its subcellular location is the plastid. The protein resides in the chloroplast thylakoid membrane. One of the components of the core complex of photosystem II (PSII). PSII is a light-driven water:plastoquinone oxidoreductase that uses light energy to abstract electrons from H(2)O, generating O(2) and a proton gradient subsequently used for ATP formation. It consists of a core antenna complex that captures photons, and an electron transfer chain that converts photonic excitation into a charge separation. The sequence is that of Photosystem II reaction center protein J from Rhodomonas salina (Cryptomonas salina).